The following is a 311-amino-acid chain: Cell division control protein 2 homolog 3 (311 aa).

In terms of domain architecture, Protein kinase spans 23-306 (YNRMDILGEG…AKAALQHPWF (284 aa)). Residues 29 to 37 (LGEGTYGVV) and K52 contribute to the ATP site. T33 carries the phosphothreonine modification. Y34 carries the post-translational modification Phosphotyrosine. D145 (proton acceptor) is an active-site residue.

This sequence belongs to the protein kinase superfamily. CMGC Ser/Thr protein kinase family. CDC2/CDKX subfamily. As to quaternary structure, forms a stable but non-covalent complex with a regulatory subunit and with a cyclin.

The catalysed reaction is L-seryl-[protein] + ATP = O-phospho-L-seryl-[protein] + ADP + H(+). It carries out the reaction L-threonyl-[protein] + ATP = O-phospho-L-threonyl-[protein] + ADP + H(+). With respect to regulation, phosphorylation at Thr-33 or Tyr-34 inactivates the enzyme. Probably involved in the control of the cell cycle. The sequence is that of Cell division control protein 2 homolog 3 (CRK3) from Trypanosoma brucei brucei.